The following is a 235-amino-acid chain: Putative uridine kinase C227.14 (235 aa).

36–43 (GGPGSGKS) serves as a coordination point for ATP.

This sequence belongs to the uridine kinase family.

It is found in the cytoplasm. Its subcellular location is the nucleus. It catalyses the reaction uridine + ATP = UMP + ADP + H(+). The enzyme catalyses cytidine + ATP = CMP + ADP + H(+). It participates in pyrimidine metabolism; CTP biosynthesis via salvage pathway; CTP from cytidine: step 1/3. It functions in the pathway pyrimidine metabolism; UMP biosynthesis via salvage pathway; UMP from uridine: step 1/1. The sequence is that of Putative uridine kinase C227.14 from Schizosaccharomyces pombe (strain 972 / ATCC 24843) (Fission yeast).